Reading from the N-terminus, the 641-residue chain is Phosphomethylpyrimidine synthase (641 aa).

The segment covering 1-13 (MNIRSNPDTTRPA) has biased composition (polar residues). The segment at 1-21 (MNIRSNPDTTRPAVTTGGLPS) is disordered. Residues asparagine 221, methionine 250, tyrosine 279, histidine 315, 335–337 (SRG), 376–379 (DGLR), and glutamate 415 each bind substrate. Histidine 419 provides a ligand contact to Zn(2+). Tyrosine 442 contacts substrate. A Zn(2+)-binding site is contributed by histidine 483. Positions 563, 566, and 571 each coordinate [4Fe-4S] cluster.

It belongs to the ThiC family. In terms of assembly, homodimer. [4Fe-4S] cluster is required as a cofactor.

The enzyme catalyses 5-amino-1-(5-phospho-beta-D-ribosyl)imidazole + S-adenosyl-L-methionine = 4-amino-2-methyl-5-(phosphooxymethyl)pyrimidine + CO + 5'-deoxyadenosine + formate + L-methionine + 3 H(+). The protein operates within cofactor biosynthesis; thiamine diphosphate biosynthesis. Functionally, catalyzes the synthesis of the hydroxymethylpyrimidine phosphate (HMP-P) moiety of thiamine from aminoimidazole ribotide (AIR) in a radical S-adenosyl-L-methionine (SAM)-dependent reaction. This chain is Phosphomethylpyrimidine synthase, found in Rhodopseudomonas palustris (strain BisB5).